The sequence spans 423 residues: UPF0229 protein PSEEN0423 (423 aa).

The interval 85–107 (GEHIARPQGGGGGGGRGKAGNSG) is disordered. Gly residues predominate over residues 92 to 107 (QGGGGGGGRGKAGNSG).

This sequence belongs to the UPF0229 family.

The protein is UPF0229 protein PSEEN0423 of Pseudomonas entomophila (strain L48).